A 75-amino-acid chain; its full sequence is UPF0270 protein Avin_35000 (75 aa).

Belongs to the UPF0270 family.

This chain is UPF0270 protein Avin_35000, found in Azotobacter vinelandii (strain DJ / ATCC BAA-1303).